We begin with the raw amino-acid sequence, 51 residues long: Insulin (51 aa).

Cystine bridges form between C7–C37, C19–C50, and C36–C41.

The protein belongs to the insulin family. As to quaternary structure, heterodimer of a B chain and an A chain linked by two disulfide bonds.

The protein localises to the secreted. In terms of biological role, insulin decreases blood glucose concentration. It increases cell permeability to monosaccharides, amino acids and fatty acids. It accelerates glycolysis, the pentose phosphate cycle, and glycogen synthesis in liver. The protein is Insulin (INS) of Camelus dromedarius (Dromedary).